The following is a 247-amino-acid chain: TLC domain-containing protein 1 (247 aa).

An N-terminal signal peptide occupies residues 1–35 (MPRLLHPALPLLLGATLTFRALRRALCRLPLPVHV). Topologically, residues 36–46 (RADPLRTWRWH) are extracellular. Residues 40–234 (LRTWRWHNLL…LLRSDFCPEH (195 aa)) enclose the TLC domain. A helical membrane pass occupies residues 47–67 (NLLVSFAHSIVSGIWALLCVW). Over 68–83 (QTPDMLVEIETAWSLS) the chain is Cytoplasmic. A helical transmembrane segment spans residues 84-104 (GYLLVCFSAGYFIHDTVDIVA). The Extracellular segment spans residues 105 to 123 (SGQTRASWEYLVHHVMAMG). The segment at residues 124–144 (AFFSGIFWSSFVGGGVLTLLV) is an intramembrane region (helical). The Extracellular segment spans residues 145–173 (EVSNIFLTIRMMMKISNAQDHLLYRVNKY). A helical transmembrane segment spans residues 174 to 194 (VNLVMYFLFRLAPQAYLTHFF). Over 195 to 201 (LRYVNQR) the chain is Cytoplasmic. A helical membrane pass occupies residues 202 to 222 (TLGTFLLGILLMLDVMIIIYF). Residues 223 to 247 (SRLLRSDFCPEHVPKKQHKDKFLTE) are Extracellular-facing.

It localises to the cell membrane. Regulates the composition and fluidity of the plasma membrane. Inhibits the incorporation of membrane-fluidizing phospholipids containing omega-3 long-chain polyunsaturated fatty acids (LCPUFA) and thereby promotes membrane rigidity. Does not appear to have any effect on LCPUFA synthesis. The chain is TLC domain-containing protein 1 (TLCD1) from Homo sapiens (Human).